We begin with the raw amino-acid sequence, 52 residues long: UPF0391 membrane protein XCV0245 (52 aa).

The next 2 membrane-spanning stretches (helical) occupy residues 5 to 25 and 27 to 47; these read AIIFFVIAIIAAVLGFSGIAG and ATNIAWILFVVFLILAVISMF.

It belongs to the UPF0391 family.

The protein resides in the cell membrane. The protein is UPF0391 membrane protein XCV0245 of Xanthomonas euvesicatoria pv. vesicatoria (strain 85-10) (Xanthomonas campestris pv. vesicatoria).